The following is a 254-amino-acid chain: HTH-type transcriptional regulator GlvR (254 aa).

One can recognise an HTH rpiR-type domain in the interval 1-77 (MQLEELINQH…VFLKWEDQPE (77 aa)). The segment at residues 37–56 (IDALAKACSVSRSSILRLAQ) is a DNA-binding region (H-T-H motif). The region spanning 106-248 (MCQLIDAADR…FRAYVDYKEA (143 aa)) is the SIS domain.

Functionally, positive regulator of the glv operon expression, which consists of GlvA, GlvR and GlvC. The chain is HTH-type transcriptional regulator GlvR (glvR) from Bacillus subtilis (strain 168).